Here is a 154-residue protein sequence, read N- to C-terminus: Ferredoxin C 1, chloroplastic (154 aa).

A chloroplast-targeting transit peptide spans 1–56; it reads MATLPLPTQTSTISLPKPYLSNSFSFPLRNATLSTTTNRRNFLTTGRIIARAYKVV. Residues 57 to 142 form the 2Fe-2S ferredoxin-type domain; the sequence is VEHDGKTTEL…DCHIKMIPEE (86 aa). Cys89, Cys94, Cys97, and Cys126 together coordinate [2Fe-2S] cluster.

The protein belongs to the 2Fe2S plant-type ferredoxin family. Requires [2Fe-2S] cluster as cofactor.

The protein localises to the plastid. The protein resides in the chloroplast. Ferredoxins are iron-sulfur proteins that transfer electrons in a wide variety of metabolic reactions. Mediates alternative electron partitioning in conditions of acceptor limitation at photosystem I. Accepts electrons from photosystem I (PSI) and is capable of electron transfer with FNR, but cannot support photoreduction of NADP(+). The polypeptide is Ferredoxin C 1, chloroplastic (Arabidopsis thaliana (Mouse-ear cress)).